The chain runs to 58 residues: Small ribosomal subunit protein bS21 (58 aa).

The disordered stretch occupies residues 24–58 (TKAGTLQEARKREHYEKPSVKRKRKSEAARKRKKI). Residues 31-42 (EARKREHYEKPS) show a composition bias toward basic and acidic residues. Residues 43–58 (VKRKRKSEAARKRKKI) show a composition bias toward basic residues.

Belongs to the bacterial ribosomal protein bS21 family.

In Streptococcus thermophilus (strain CNRZ 1066), this protein is Small ribosomal subunit protein bS21.